The chain runs to 336 residues: Methionyl-tRNA formyltransferase (336 aa).

Residue 112-115 coordinates (6S)-5,6,7,8-tetrahydrofolate; the sequence is SILP.

This sequence belongs to the Fmt family.

The catalysed reaction is L-methionyl-tRNA(fMet) + (6R)-10-formyltetrahydrofolate = N-formyl-L-methionyl-tRNA(fMet) + (6S)-5,6,7,8-tetrahydrofolate + H(+). Attaches a formyl group to the free amino group of methionyl-tRNA(fMet). The formyl group appears to play a dual role in the initiator identity of N-formylmethionyl-tRNA by promoting its recognition by IF2 and preventing the misappropriation of this tRNA by the elongation apparatus. The sequence is that of Methionyl-tRNA formyltransferase from Trichodesmium erythraeum (strain IMS101).